Consider the following 281-residue polypeptide: MQKKYYELFFIVEERYKNLFLDFAFDLGIEAIEEKDNGVYIRSHESLEELSWALEIFAQKLTTTFNLNHKIISNLSLVEKENKDWIQEYKKGIKPILVDNVYIHTTWQEEKKNFINIKINPALAFGSGHHESTYSCVKFLQKFSKSKLRALDLGCGSGILGIIMAKFGCNVEICDTDELAIDSSLENARLNGVDFHKAWCGSIDKANGLYNLIVANIIADVILILEKDIKNHLEDNAILILSGILDKYSTRIKEKFQDLELIDEMQINEWCSFVYKNNKKG.

S-adenosyl-L-methionine is bound by residues threonine 133, glycine 154, aspartate 175, and asparagine 216.

It belongs to the methyltransferase superfamily. PrmA family.

The protein resides in the cytoplasm. The catalysed reaction is L-lysyl-[protein] + 3 S-adenosyl-L-methionine = N(6),N(6),N(6)-trimethyl-L-lysyl-[protein] + 3 S-adenosyl-L-homocysteine + 3 H(+). Functionally, methylates ribosomal protein L11. The chain is Ribosomal protein L11 methyltransferase from Campylobacter jejuni subsp. jejuni serotype O:6 (strain 81116 / NCTC 11828).